Consider the following 424-residue polypeptide: Histidine--tRNA ligase (424 aa).

This sequence belongs to the class-II aminoacyl-tRNA synthetase family. As to quaternary structure, homodimer.

Its subcellular location is the cytoplasm. The enzyme catalyses tRNA(His) + L-histidine + ATP = L-histidyl-tRNA(His) + AMP + diphosphate + H(+). The polypeptide is Histidine--tRNA ligase (Shewanella amazonensis (strain ATCC BAA-1098 / SB2B)).